We begin with the raw amino-acid sequence, 447 residues long: CBL-interacting serine/threonine-protein kinase 9 (447 aa).

Residues Tyr-19–Phe-274 enclose the Protein kinase domain. Residues Leu-25 to Val-33 and Lys-48 contribute to the ATP site. The Proton acceptor role is filled by Asp-142. The interval Asp-160–Glu-189 is activation loop. Residue Ser-164 is modified to Phosphoserine. Thr-178 is subject to Phosphothreonine. The NAF domain maps to Glu-312 to Glu-336. A PPI region spans residues Lys-343 to Val-372.

The protein belongs to the protein kinase superfamily. CAMK Ser/Thr protein kinase family. SNF1 subfamily. Interacts with CBL2 and CBL3. The cofactor is Mn(2+). In terms of tissue distribution, expressed at low levels in roots and shoots. Detected in root vascular bundles and in the leaf vascular tissue and hydathode, but not in root tips.

The protein resides in the cytoplasm. It is found in the nucleus. The catalysed reaction is L-seryl-[protein] + ATP = O-phospho-L-seryl-[protein] + ADP + H(+). It catalyses the reaction L-threonyl-[protein] + ATP = O-phospho-L-threonyl-[protein] + ADP + H(+). CIPK serine-threonine protein kinases interact with CBL proteins. Binding of a CBL protein to the regulatory NAF domain of CIPK protein lead to the activation of the kinase in a calcium-dependent manner. Involved in K(+) homeostasis under low-K(+) stress. This is CBL-interacting serine/threonine-protein kinase 9 (CIPK9) from Arabidopsis thaliana (Mouse-ear cress).